The primary structure comprises 271 residues: Type III pantothenate kinase (271 aa).

6-13 (DVRNTNIV) provides a ligand contact to ATP. 109 to 112 (GADR) serves as a coordination point for substrate. The Proton acceptor role is filled by aspartate 111. Aspartate 131 serves as a coordination point for K(+). Threonine 134 contributes to the ATP binding site. Substrate is bound at residue threonine 186.

The protein belongs to the type III pantothenate kinase family. As to quaternary structure, homodimer. NH4(+) serves as cofactor. It depends on K(+) as a cofactor.

The protein resides in the cytoplasm. It catalyses the reaction (R)-pantothenate + ATP = (R)-4'-phosphopantothenate + ADP + H(+). It participates in cofactor biosynthesis; coenzyme A biosynthesis; CoA from (R)-pantothenate: step 1/5. Functionally, catalyzes the phosphorylation of pantothenate (Pan), the first step in CoA biosynthesis. The polypeptide is Type III pantothenate kinase (Rhodococcus opacus (strain B4)).